The sequence spans 172 residues: Type IV secretion system putative outer membrane lipoprotein BRA0058/BS1330_II0058 (172 aa).

The N-terminal stretch at M1–A15 is a signal peptide. C16 carries N-palmitoyl cysteine lipidation. A lipid anchor (S-diacylglycerol cysteine) is attached at C16. The OmpA-like domain occupies W58–K172.

The protein resides in the cell outer membrane. The VirB system could be required for the establishment of the replication niche in the host. The chain is Type IV secretion system putative outer membrane lipoprotein BRA0058/BS1330_II0058 from Brucella suis biovar 1 (strain 1330).